The sequence spans 178 residues: Large ribosomal subunit protein uL6 (178 aa).

The protein belongs to the universal ribosomal protein uL6 family. Part of the 50S ribosomal subunit.

Functionally, this protein binds to the 23S rRNA, and is important in its secondary structure. It is located near the subunit interface in the base of the L7/L12 stalk, and near the tRNA binding site of the peptidyltransferase center. The sequence is that of Large ribosomal subunit protein uL6 from Coxiella burnetii (strain CbuG_Q212) (Coxiella burnetii (strain Q212)).